The sequence spans 152 residues: Small ribosomal subunit protein uS13 (152 aa).

Position 41 is a phosphoserine (Ser41).

This sequence belongs to the universal ribosomal protein uS13 family.

It is found in the cytoplasm. Located at the top of the head of the 40S subunit, it contacts several helices of the 18S rRNA. This chain is Small ribosomal subunit protein uS13 (RpS18), found in Drosophila melanogaster (Fruit fly).